The following is a 237-amino-acid chain: Small ribosomal subunit protein uS3 (237 aa).

One can recognise a KH type-2 domain in the interval 17-86 (VERHLGHELK…SPQIEVQQVD (70 aa)).

This sequence belongs to the universal ribosomal protein uS3 family. As to quaternary structure, part of the 30S ribosomal subunit.

Functionally, binds the lower part of the 30S subunit head. The polypeptide is Small ribosomal subunit protein uS3 (Methanospirillum hungatei JF-1 (strain ATCC 27890 / DSM 864 / NBRC 100397 / JF-1)).